A 309-amino-acid chain; its full sequence is Dehydrogenase/reductase SDR family member 7B (309 aa).

Residues 1-4 (MDLT) lie on the Cytoplasmic side of the membrane. A helical; Signal-anchor for type II membrane protein membrane pass occupies residues 5 to 25 (TWAIFPLLLGSIGVYSLYKLL). Over 26 to 272 (QRLRSGAYLQ…AVGERRKELL (247 aa)) the chain is Lumenal. Ser-46 and Leu-48 together coordinate NAD(+). A substrate-binding site is contributed by Ser-178. NAD(+)-binding residues include Tyr-191, Lys-195, and Thr-226. Residue Tyr-191 is the Proton acceptor of the active site.

The protein belongs to the short-chain dehydrogenases/reductases (SDR) family.

It localises to the endoplasmic reticulum membrane. Functionally, putative oxidoreductase. The sequence is that of Dehydrogenase/reductase SDR family member 7B (dhrs7b) from Xenopus tropicalis (Western clawed frog).